The following is a 416-amino-acid chain: Signal recognition particle receptor FtsY (416 aa).

The span at 1–10 (MFSFFRRKKK) shows a compositional bias: basic residues. The disordered stretch occupies residues 1–24 (MFSFFRRKKKQETPALEEAQVQET). GTP-binding positions include 224–231 (GINGAGKT), 304–308 (DTAGR), and 368–371 (TKLD).

It belongs to the GTP-binding SRP family. FtsY subfamily. In terms of assembly, part of the signal recognition particle protein translocation system, which is composed of SRP and FtsY. SRP is a ribonucleoprotein composed of Ffh and a 4.5S RNA molecule. Requires Mg(2+) as cofactor.

The protein resides in the cell membrane. The protein localises to the cytoplasm. It carries out the reaction GTP + H2O = GDP + phosphate + H(+). Involved in targeting and insertion of nascent membrane proteins into the cytoplasmic membrane. Acts as a receptor for the complex formed by the signal recognition particle (SRP) and the ribosome-nascent chain (RNC). Interaction with SRP-RNC leads to the transfer of the RNC complex to the Sec translocase for insertion into the membrane, the hydrolysis of GTP by both Ffh and FtsY, and the dissociation of the SRP-FtsY complex into the individual components. The sequence is that of Signal recognition particle receptor FtsY from Neisseria gonorrhoeae.